The following is a 317-amino-acid chain: MSVQGPQRRLLGSLNSTSPAAPRLGLAANQTGPRCLEVSVPDGLFLSLGLVSVVENVLVVAAIAKNRNLHSPMYYFICCLAVSDLLVSVSSVLETAVMLLLEAGTLAGRAAVVQQLDDVIDVLVCGAMVSSLCFLGAIAVDRYISIFYALRYHSIVTLPRAWRAISAIWVASVLSSTLFIAYYDHTAVLLCLVSFFVAMLVLMAVLYVHMLARACQHARGIARLHKRQRPVHQGLGLKGAATLTILLGIFFLCWGPFFLHLSLMVLCPRHPICGCVFKNFNLFLTLIICNSIVDPLIYAFRSQELRKTLQEVLLCSW.

The Extracellular segment spans residues 1 to 37 (MSVQGPQRRLLGSLNSTSPAAPRLGLAANQTGPRCLE). Asn-15 and Asn-29 each carry an N-linked (GlcNAc...) asparagine glycan. A helical transmembrane segment spans residues 38 to 63 (VSVPDGLFLSLGLVSVVENVLVVAAI). Residues 64 to 72 (AKNRNLHSP) are Cytoplasmic-facing. A helical membrane pass occupies residues 73–93 (MYYFICCLAVSDLLVSVSSVL). Over 94–118 (ETAVMLLLEAGTLAGRAAVVQQLDD) the chain is Extracellular. A helical membrane pass occupies residues 119 to 140 (VIDVLVCGAMVSSLCFLGAIAV). The Cytoplasmic portion of the chain corresponds to 141-163 (DRYISIFYALRYHSIVTLPRAWR). The chain crosses the membrane as a helical span at residues 164 to 183 (AISAIWVASVLSSTLFIAYY). Over 184 to 191 (DHTAVLLC) the chain is Extracellular. A helical transmembrane segment spans residues 192-211 (LVSFFVAMLVLMAVLYVHML). Residues 212-240 (ARACQHARGIARLHKRQRPVHQGLGLKGA) lie on the Cytoplasmic side of the membrane. Residues 241–266 (ATLTILLGIFFLCWGPFFLHLSLMVL) traverse the membrane as a helical segment. The Extracellular portion of the chain corresponds to 267-279 (CPRHPICGCVFKN). The helical transmembrane segment at 280 to 300 (FNLFLTLIICNSIVDPLIYAF) threads the bilayer. The Cytoplasmic portion of the chain corresponds to 301 to 317 (RSQELRKTLQEVLLCSW). The S-palmitoyl cysteine moiety is linked to residue Cys-315.

It belongs to the G-protein coupled receptor 1 family. Interacts with MGRN1, but does not undergo MGRN1-mediated ubiquitination; this interaction competes with GNAS-binding and thus inhibits agonist-induced cAMP production. Interacts with OPN3; the interaction results in a decrease in MC1R-mediated cAMP signaling and ultimately a decrease in melanin production in melanocytes.

It localises to the cell membrane. Functionally, receptor for MSH (alpha, beta and gamma) and ACTH. The activity of this receptor is mediated by G proteins which activate adenylate cyclase. Mediates melanogenesis, the production of eumelanin (black/brown) and phaeomelanin (red/yellow), via regulation of cAMP signaling in melanocytes. The chain is Melanocyte-stimulating hormone receptor (MC1R) from Panthera onca (Jaguar).